The following is a 2223-amino-acid chain: Sperm-associated antigen 17 (2223 aa).

Basic and acidic residues-rich tracts occupy residues 144–172 (RENEKKVIEDKPKLEKDKGKAKSPKEKKA) and 200–212 (RRGEDDHTNRYID). The disordered stretch occupies residues 144–214 (RENEKKVIED…DHTNRYIDDE (71 aa)). Positions 266 to 295 (NQQQEVLLQSEDLEAEKLKKENAIKELKTF) form a coiled coil. Disordered regions lie at residues 387-416 (MPTSEAPQPAVPAPGKKKAQYEEPQAPPPV), 680-710 (MSVQDNESNREPSDPSQCDANNMKHSDLNNL), 731-762 (PQHESLEQTTNNEIKDDAVTKADSHEKKPKKM), 950-1015 (EERL…EPKI), 1179-1212 (GKIKGKEKPKESLKEEEHPKEEEKKEEEVEPEPV), and 1345-1378 (ETIPSEITNTKKGKSHKSQSSMAHKGEIHDPPPE). 3 stretches are compositionally biased toward basic and acidic residues: residues 743–756 (EIKDDAVTKADSHE), 950–999 (EERL…EQVK), and 1182–1205 (KGKEKPKESLKEEEHPKEEEKKEE). Positions 940–966 (WKEEQHRLAEEERLREEKKAEKKGKEA) form a coiled coil. Over residues 1345 to 1354 (ETIPSEITNT) the composition is skewed to polar residues. Positions 1874–1907 (RHTASSKRWKEKIDKTRKEIETTQNYLMDIKNRI) form a coiled coil. 2 disordered regions span residues 1938–1957 (TKKNEDANETAVQDTSDLNL) and 1962–2008 (HKVS…SYEP). Residues 1988–1998 (TAQNQTENLTK) are compositionally biased toward polar residues.

Interacts (via the C-terminus) with SPAG6; the interaction probably occurs on polymerized microtubules. As to expression, highly expressed in testis. Expressed in organs that contain cilia-bearing cells including brain, oviduct, lung, and uterus.

Its subcellular location is the cytoplasm. The protein localises to the cytoskeleton. It is found in the flagellum axoneme. It localises to the cytoplasmic vesicle. The protein resides in the secretory vesicle. Its subcellular location is the acrosome. The protein localises to the golgi apparatus. Its function is as follows. Component of the central pair apparatus of ciliary axonemes. Plays a critical role in the function and structure of motile cilia. May play a role in endochondral bone formation, most likely because of a function in primary cilia of chondrocytes and osteoblasts. Essential for normal spermatogenesis and male fertility. Required for normal manchette structure, transport of proteins along the manchette microtubules and formation of the sperm head and flagellum. Essential for sperm flagellum development and proper assembly of the respiratory motile cilia central pair apparatus, but not the brain ependymal cilia. The chain is Sperm-associated antigen 17 (SPAG17) from Homo sapiens (Human).